Here is a 343-residue protein sequence, read N- to C-terminus: Cilia- and flagella-associated protein 36 (343 aa).

A phosphoserine mark is found at Ser-85 and Ser-147. The stretch at 147–181 (SDLEQEEMKILREVLRKSKEEYDQEEERKRKKQSS) forms a coiled coil. A disordered region spans residues 165–191 (KEEYDQEEERKRKKQSSEGKMEEPPIY). Ser-201 is modified (phosphoserine). The disordered stretch occupies residues 286-323 (SMRKDMRAKQIQNTEQKGKPTREAEEMTEKPEMTAEEK). A compositionally biased stretch (basic and acidic residues) spans 301 to 323 (QKGKPTREAEEMTEKPEMTAEEK).

Belongs to the CFAP36 family. Interacts with ARL3. In terms of tissue distribution, widely expressed (at protein level).

The protein resides in the nucleus. It is found in the cytoplasm. The protein localises to the cell projection. Its subcellular location is the cilium. It localises to the flagellum. In terms of biological role, may act as an effector for ARL3. The protein is Cilia- and flagella-associated protein 36 of Rattus norvegicus (Rat).